The sequence spans 229 residues: ATP synthase subunit a (229 aa).

The next 6 helical transmembrane spans lie at 25–45 (ADAV…SIAA), 82–102 (FFPL…IGLV), 104–124 (GFFP…VVFV), 142–162 (FLGP…IGHL), 181–201 (LVLI…MMLM), and 202–222 (GVLV…IYIQ).

This sequence belongs to the ATPase A chain family. F-type ATPases have 2 components, CF(1) - the catalytic core - and CF(0) - the membrane proton channel. CF(1) has five subunits: alpha(3), beta(3), gamma(1), delta(1), epsilon(1). CF(0) has three main subunits: a(1), b(2) and c(9-12). The alpha and beta chains form an alternating ring which encloses part of the gamma chain. CF(1) is attached to CF(0) by a central stalk formed by the gamma and epsilon chains, while a peripheral stalk is formed by the delta and b chains.

The protein localises to the cell inner membrane. Functionally, key component of the proton channel; it plays a direct role in the translocation of protons across the membrane. The sequence is that of ATP synthase subunit a from Citrifermentans bemidjiense (strain ATCC BAA-1014 / DSM 16622 / JCM 12645 / Bem) (Geobacter bemidjiensis).